The following is a 463-amino-acid chain: ATP synthase subunit beta (463 aa).

151–158 (GGAGVGKT) lines the ATP pocket.

This sequence belongs to the ATPase alpha/beta chains family. F-type ATPases have 2 components, CF(1) - the catalytic core - and CF(0) - the membrane proton channel. CF(1) has five subunits: alpha(3), beta(3), gamma(1), delta(1), epsilon(1). CF(0) has three main subunits: a(1), b(2) and c(9-12). The alpha and beta chains form an alternating ring which encloses part of the gamma chain. CF(1) is attached to CF(0) by a central stalk formed by the gamma and epsilon chains, while a peripheral stalk is formed by the delta and b chains.

It localises to the cell membrane. It carries out the reaction ATP + H2O + 4 H(+)(in) = ADP + phosphate + 5 H(+)(out). Functionally, produces ATP from ADP in the presence of a proton gradient across the membrane. The catalytic sites are hosted primarily by the beta subunits. In Clostridium botulinum (strain Okra / Type B1), this protein is ATP synthase subunit beta.